The following is a 155-amino-acid chain: Small ribosomal subunit protein uS7 (155 aa).

It belongs to the universal ribosomal protein uS7 family. In terms of assembly, part of the 30S ribosomal subunit. Contacts proteins S9 and S11.

Its function is as follows. One of the primary rRNA binding proteins, it binds directly to 16S rRNA where it nucleates assembly of the head domain of the 30S subunit. Is located at the subunit interface close to the decoding center, probably blocks exit of the E-site tRNA. In Corynebacterium aurimucosum (strain ATCC 700975 / DSM 44827 / CIP 107346 / CN-1) (Corynebacterium nigricans), this protein is Small ribosomal subunit protein uS7.